We begin with the raw amino-acid sequence, 717 residues long: MLGKHTSPHTVPGHRAPWLSPGIFCLGLPFLLGWVGLLQGHPQCLDYGPPFRPPQHLDFCSDYDSFGCCDQRKDRRIAARYWDIMSYFDLKAHELCGGYIKDILCQECSPYAAHLYDAENPQTPLRNLPGLCSDYCSAFHRSCHSAISLLTNDRGLQESHGKDGARFCHLLNLPDEDYCFPNVLRNDQLNRNLGVVAEDQQGCLQLCLVEVANGLRNPVSMVHAGDGTHRFFVAEQVGVVWVYLPDGSRLEQPFLDLKSMVLTTPWIGDERGFLGLAFHPKFRHNRKFYIYYSCLGKRKVEKIRISEMKVSLSDGNRADPKSERVILEIDEPASNHNGGQLLFGLDGYLYIFTGDGGQAGDPFGKFGNAQNKSSLLGKVLRIDVNGADVDGQRYRVPLDNPFVSEPGAHPAVYAYGVRNMWRCAVDRGDPVTHRGRGRIFCGDVGQNKFEEVDLIVKGGNYGWRAKEGFECYDKRLCRNASLDDILPIYAYGHGVGKSVTGGYVYRGCESPNLNGLYIFGDFMSGRLMALQEDRKTQKWTKRDICLGNSTCAFPGLISAYSRFIISFAEDEAGELYFLATSYPSAYAPHGSIYKFVDPSRRAPPGKCKYKPVPVKTKSKKVRFRPLAATVLDLLKEESQKAARKASNATFTSSSDRVASQKGSLKKPASSRSSKKTFRRPGTKKKSRVWSPRPQGKRKPNLDSHGVGMRQAAGRSHP.

Residues 1–40 (MLGKHTSPHTVPGHRAPWLSPGIFCLGLPFLLGWVGLLQG) form the signal peptide. 4 cysteine pairs are disulfide-bonded: C203-C545, C207-C551, C423-C441, and C508-C607. The interval 642–717 (ARKASNATFT…MRQAAGRSHP (76 aa)) is disordered. Polar residues predominate over residues 646–662 (SNATFTSSSDRVASQKG). N647 carries N-linked (GlcNAc...) asparagine glycosylation. Over residues 672–687 (SSKKTFRRPGTKKKSR) the composition is skewed to basic residues.

It belongs to the HHIP family.

It localises to the secreted. In Mus musculus (Mouse), this protein is HHIP-like protein 2 (Hhipl2).